A 121-amino-acid chain; its full sequence is MARIEGIDLPRDKRIVIGLTYIYGIGNTSAQKILAEAGVSEDVRVRDLTPDQEDKIRAVVDGYKTEGDLRREVSLNIKLLQEIGSYRGMRHRRGLPVRGQHTKNNARTRKGKKVSIAGRKK.

The interval 90–121 (RHRRGLPVRGQHTKNNARTRKGKKVSIAGRKK) is disordered.

The protein belongs to the universal ribosomal protein uS13 family. In terms of assembly, part of the 30S ribosomal subunit. Forms a loose heterodimer with protein S19. Forms two bridges to the 50S subunit in the 70S ribosome.

Its function is as follows. Located at the top of the head of the 30S subunit, it contacts several helices of the 16S rRNA. In the 70S ribosome it contacts the 23S rRNA (bridge B1a) and protein L5 of the 50S subunit (bridge B1b), connecting the 2 subunits; these bridges are implicated in subunit movement. Contacts the tRNAs in the A and P-sites. This chain is Small ribosomal subunit protein uS13, found in Lactiplantibacillus plantarum (strain ATCC BAA-793 / NCIMB 8826 / WCFS1) (Lactobacillus plantarum).